The following is a 442-amino-acid chain: Glutamate--methylamine ligase (442 aa).

The region spanning 13 to 97 (NQVKYILAQF…IACDGHTHGK (85 aa)) is the GS beta-grasp domain. Positions 103–442 (TRVVLKKQLE…WEVNSYLEFF (340 aa)) constitute a GS catalytic domain.

It belongs to the glutamine synthetase family. Type 3 subfamily. Requires Mg(2+) as cofactor.

The catalysed reaction is methylamine + L-glutamate + ATP = N(5)-methyl-L-glutamine + ADP + phosphate + H(+). In terms of biological role, catalyzes the formation of N(5)-methyl-L-glutamine from glutamate and methylamine. This Methyloversatilis universalis (strain ATCC BAA-1314 / DSM 25237 / JCM 13912 / CCUG 52030 / FAM5) protein is Glutamate--methylamine ligase.